The following is a 219-amino-acid chain: Small ribosomal subunit protein uS3c (219 aa).

The KH type-2 domain occupies 43-118; it reads IKNYVQNNMI…KLNITITRIE (76 aa).

This sequence belongs to the universal ribosomal protein uS3 family. As to quaternary structure, part of the 30S ribosomal subunit.

Its subcellular location is the plastid. In Cuscuta exaltata (Tall dodder), this protein is Small ribosomal subunit protein uS3c (rps3).